Consider the following 271-residue polypeptide: Thymidine kinase (271 aa).

ATP contacts are provided by residues glycine 74–threonine 81 and aspartate 152–glutamine 155. The Proton acceptor role is filled by glutamate 153. Tyrosine 184 contacts substrate. Cysteine 209 and cysteine 212 together coordinate Zn(2+). Tyrosine 237 is a substrate binding site. Cysteine 241 lines the Zn(2+) pocket.

The protein belongs to the thymidine kinase family.

The catalysed reaction is thymidine + ATP = dTMP + ADP + H(+). The sequence is that of Thymidine kinase (TK) from Oryza sativa subsp. japonica (Rice).